Here is a 117-residue protein sequence, read N- to C-terminus: Large ribosomal subunit protein bL20c (117 aa).

Belongs to the bacterial ribosomal protein bL20 family.

It is found in the plastid. Its subcellular location is the chloroplast. Functionally, binds directly to 23S ribosomal RNA and is necessary for the in vitro assembly process of the 50S ribosomal subunit. It is not involved in the protein synthesizing functions of that subunit. The sequence is that of Large ribosomal subunit protein bL20c from Acorus calamus (Sweet flag).